The primary structure comprises 105 residues: DRDAQTLTDERSDQGDGNFRYEFETSNGIYTQKTGTPGSEGQSNYQGSFRFPLEDGTIAEVSYIADEYGFQPSSDLLPVGPPAPPHVQRLLEIAEDQRRQGITFD.

Residues 1 to 21 are disordered; it reads DRDAQTLTDERSDQGDGNFRY. The Chitin-binding type R&amp;R domain maps to 16-81; the sequence is DGNFRYEFET…PSSDLLPVGP (66 aa).

In terms of tissue distribution, arthrodial membrane.

This chain is Cuticle protein AMP2, found in Homarus americanus (American lobster).